Here is a 520-residue protein sequence, read N- to C-terminus: Nonsense-mediated mRNA decay factor SMG9 (520 aa).

Positions 1-143 (MSESGHSQPG…KGEKEGQRPT (143 aa)) are disordered. S2 bears the N-acetylserine mark. Residues S2, S4, S7, S32, and S53 each carry the phosphoserine modification. A compositionally biased stretch (basic and acidic residues) spans 36–53 (GRERDYIAPWERERRDGS). Pro residues-rich tracts occupy residues 78–94 (QPPP…PAPL) and 122–133 (TAPPPPTAPAPP). S451 is modified (phosphoserine).

This sequence belongs to the SMG9 family. Self-associates to form homodimers and forms heterodimers with SMG8; these assembly forms may represent SMG1C intermediate forms. Component of the SMG1C complex composed of SMG1, SMG8 and SMG9. Interacts with DHX34; the interaction is RNA-independent. Post-translationally, phosphorylated by SMG1.

Functionally, involved in nonsense-mediated decay (NMD) of mRNAs containing premature stop codons. Is recruited by release factors to stalled ribosomes together with SMG1 and SMG8 (forming the SMG1C protein kinase complex) and, in the SMG1C complex, is required for the efficient association between SMG1 and SMG8. Plays a role in brain, heart, and eye development. The polypeptide is Nonsense-mediated mRNA decay factor SMG9 (Mus musculus (Mouse)).